The following is a 485-amino-acid chain: Acetyl-coenzyme A carboxylase carboxyl transferase subunit beta, chloroplastic (485 aa).

Residues 218–485 (LWIQCDNCYA…FFPLNKNEIK (268 aa)) form the CoA carboxyltransferase N-terminal domain. Residues C222, C225, C241, and C244 each contribute to the Zn(2+) site. Residues 222-244 (CDNCYALIYKKALKFKMNVCEQC) form a C4-type zinc finger.

It belongs to the AccD/PCCB family. As to quaternary structure, acetyl-CoA carboxylase is a heterohexamer composed of biotin carboxyl carrier protein, biotin carboxylase and 2 subunits each of ACCase subunit alpha and ACCase plastid-coded subunit beta (accD). Zn(2+) serves as cofactor.

Its subcellular location is the plastid. The protein localises to the chloroplast stroma. The enzyme catalyses N(6)-carboxybiotinyl-L-lysyl-[protein] + acetyl-CoA = N(6)-biotinyl-L-lysyl-[protein] + malonyl-CoA. The protein operates within lipid metabolism; malonyl-CoA biosynthesis; malonyl-CoA from acetyl-CoA: step 1/1. In terms of biological role, component of the acetyl coenzyme A carboxylase (ACC) complex. Biotin carboxylase (BC) catalyzes the carboxylation of biotin on its carrier protein (BCCP) and then the CO(2) group is transferred by the transcarboxylase to acetyl-CoA to form malonyl-CoA. The polypeptide is Acetyl-coenzyme A carboxylase carboxyl transferase subunit beta, chloroplastic (Aethionema cordifolium (Lebanon stonecress)).